A 230-amino-acid chain; its full sequence is Endonuclease NucS (230 aa).

It belongs to the NucS endonuclease family.

It is found in the cytoplasm. Its function is as follows. Cleaves both 3' and 5' ssDNA extremities of branched DNA structures. The polypeptide is Endonuclease NucS (Corynebacterium efficiens (strain DSM 44549 / YS-314 / AJ 12310 / JCM 11189 / NBRC 100395)).